Here is a 692-residue protein sequence, read N- to C-terminus: Elongation factor G (692 aa).

The tr-type G domain maps to 8–283 (KNTRNIGIMA…AVVDYLPSPV (276 aa)). GTP is bound by residues 17 to 24 (AHIDAGKT), 81 to 85 (DTPGH), and 135 to 138 (NKMD).

It belongs to the TRAFAC class translation factor GTPase superfamily. Classic translation factor GTPase family. EF-G/EF-2 subfamily.

The protein resides in the cytoplasm. Functionally, catalyzes the GTP-dependent ribosomal translocation step during translation elongation. During this step, the ribosome changes from the pre-translocational (PRE) to the post-translocational (POST) state as the newly formed A-site-bound peptidyl-tRNA and P-site-bound deacylated tRNA move to the P and E sites, respectively. Catalyzes the coordinated movement of the two tRNA molecules, the mRNA and conformational changes in the ribosome. This Exiguobacterium sp. (strain ATCC BAA-1283 / AT1b) protein is Elongation factor G.